The sequence spans 189 residues: GTPase HRas (189 aa).

Met-1 is modified (N-acetylmethionine; in GTPase HRas; alternate). The residue at position 2 (Thr-2) is an N-acetylthreonine; in GTPase HRas, N-terminally processed. Residues 13–18 (GVGKSA), 29–35 (VDEYDPT), 59–60 (AG), 116–119 (NKCD), and 145–147 (SAK) contribute to the GTP site. The short motif at 32 to 40 (YDPTIEDSY) is the Effector region element. Thr-35 is a glycosylation site ((Microbial infection) O-linked (Glc) threonine; by P.sordellii toxin TcsL). Cys-118 is modified (S-nitrosocysteine). A hypervariable region region spans residues 166–185 (HKLRKLNPPDESGPGCMSCK). Lys-170 participates in a covalent cross-link: Glycyl lysine isopeptide (Lys-Gly) (interchain with G-Cter in ubiquitin). Cys-181 is lipidated: S-palmitoyl cysteine. Cys-184 carries the S-(15-deoxy-Delta12,14-prostaglandin J2-9-yl)cysteine; alternate lipid modification. The S-palmitoyl cysteine; alternate moiety is linked to residue Cys-184. Cys-186 bears the Cysteine methyl ester mark. The S-farnesyl cysteine moiety is linked to residue Cys-186. Residues 187–189 (VLS) constitute a propeptide, removed in mature form.

The protein belongs to the small GTPase superfamily. Ras family. In terms of assembly, in its GTP-bound form interacts with PLCE1. Interacts with TBC1D10C. Interacts with RGL3. Interacts with HSPD1. Found in a complex with at least BRAF, HRAS, MAP2K1, MAPK3 and RGS14. Interacts (active GTP-bound form) with RGS14 (via RBD 1 domain). Forms a signaling complex with RASGRP1 and DGKZ. Interacts with RASSF5. Interacts with PDE6D. Interacts with IKZF3. Interacts with RACK1. Interacts with PIK3CG; the interaction is required for membrane recruitment and beta-gamma G protein dimer-dependent activation of the PI3K gamma complex PIK3CG:PIK3R6. Interacts with RAPGEF2. Interacts (active GTP-bound form) with both SHOC2 and PP1c (all isoforms) to form a tertiary complex; SHOC2 and PP1c preferably bind M-Ras/MRAS, but they also bind K-Ras/KRAS, N-Ras/NRAS and H-Ras/HRAS. Interacts (GTP-bound form) with MAPKAP1/SIN1; inhibiting H-Ras/HRAS activity. Palmitoylated by the ZDHHC9-GOLGA7 complex. A continuous cycle of de- and re-palmitoylation regulates rapid exchange between plasma membrane and Golgi. Post-translationally, S-nitrosylated; critical for redox regulation. Important for stimulating guanine nucleotide exchange. No structural perturbation on nitrosylation. In terms of processing, the covalent modification of cysteine by 15-deoxy-Delta12,14-prostaglandin-J2 is autocatalytic and reversible. It may occur as an alternative to other cysteine modifications, such as S-nitrosylation and S-palmitoylation. Acetylation at Lys-104 prevents interaction with guanine nucleotide exchange factors (GEFs). Post-translationally, fatty-acylated at Lys-170. In terms of processing, ubiquitinated by the BCR(LZTR1) E3 ubiquitin ligase complex at Lys-170 in a non-degradative manner, leading to inhibit Ras signaling by decreasing Ras association with membranes. (Microbial infection) Glucosylated at Thr-35 by P.sordellii toxin TcsL. Monoglucosylation completely prevents the recognition of the downstream effector, blocking the GTPases in their inactive form, leading to inhibit Ras signaling. As to expression, widely expressed.

It is found in the cell membrane. The protein localises to the golgi apparatus. The protein resides in the golgi apparatus membrane. It localises to the nucleus. Its subcellular location is the cytoplasm. It is found in the perinuclear region. It carries out the reaction GTP + H2O = GDP + phosphate + H(+). Alternates between an inactive form bound to GDP and an active form bound to GTP. Activated by a guanine nucleotide-exchange factor (GEF) and inactivated by a GTPase-activating protein (GAP). Involved in the activation of Ras protein signal transduction. Ras proteins bind GDP/GTP and possess intrinsic GTPase activity. The sequence is that of GTPase HRas (HRAS) from Homo sapiens (Human).